Here is a 133-residue protein sequence, read N- to C-terminus: ATP synthase epsilon chain, chloroplastic (133 aa).

This sequence belongs to the ATPase epsilon chain family. In terms of assembly, F-type ATPases have 2 components, CF(1) - the catalytic core - and CF(0) - the membrane proton channel. CF(1) has five subunits: alpha(3), beta(3), gamma(1), delta(1), epsilon(1). CF(0) has three main subunits: a, b and c.

It localises to the plastid. The protein localises to the chloroplast thylakoid membrane. Its function is as follows. Produces ATP from ADP in the presence of a proton gradient across the membrane. This Thalassiosira pseudonana (Marine diatom) protein is ATP synthase epsilon chain, chloroplastic.